The chain runs to 332 residues: Endonuclease 8-like 2 (332 aa).

Pro2 serves as the catalytic Schiff-base intermediate with DNA. Glu3 (proton donor) is an active-site residue. The active-site Proton donor; for beta-elimination activity is Lys50. At Lys50 the chain carries N6-acetyllysine. The segment at 59-121 (DEEMGPPGSS…EDDSEYLERD (63 aa)) is disordered. Phosphoserine is present on Ser68. Over residues 74 to 84 (PQKEVQKEGAA) the composition is skewed to basic and acidic residues. The segment covering 94-104 (GQKTLDGSSRS) has biased composition (polar residues). Lys154 is subject to N6-acetyllysine. Asn231 contributes to the DNA binding site. An FPG-type zinc finger spans residues 284-320 (QVYQKEQCPAGHQVMKEAFGPEDGLQRLTWWCPQCQP). The active-site Proton donor; for delta-elimination activity is Arg310.

It belongs to the FPG family. As to quaternary structure, binds EP300. In terms of tissue distribution, detected in testis, skeletal muscle, heart, brain, placenta, lung, pancreas, kidney and liver.

The protein localises to the nucleus. The catalysed reaction is 2'-deoxyribonucleotide-(2'-deoxyribose 5'-phosphate)-2'-deoxyribonucleotide-DNA = a 3'-end 2'-deoxyribonucleotide-(2,3-dehydro-2,3-deoxyribose 5'-phosphate)-DNA + a 5'-end 5'-phospho-2'-deoxyribonucleoside-DNA + H(+). With respect to regulation, acetylation of Lys-50 leads to loss of DNA nicking activity. Acetylation of Lys-154 has no effect. Functionally, involved in base excision repair of DNA damaged by oxidation or by mutagenic agents. Has DNA glycosylase activity towards 5-hydroxyuracil and other oxidized derivatives of cytosine with a preference for mismatched double-stranded DNA (DNA bubbles). Has low or no DNA glycosylase activity towards thymine glycol, 2-hydroxyadenine, hypoxanthine and 8-oxoguanine. Has AP (apurinic/apyrimidinic) lyase activity and introduces nicks in the DNA strand. Cleaves the DNA backbone by beta-delta elimination to generate a single-strand break at the site of the removed base with both 3'- and 5'-phosphates. This is Endonuclease 8-like 2 (NEIL2) from Homo sapiens (Human).